The chain runs to 260 residues: Ras-related protein Rab-32B (260 aa).

Positions 11–50 are disordered; sequence FDTDPDVSTDSNYNNNNNSNNNNSIISNSNNNNNNNNNNV. Over residues 21-49 the composition is skewed to low complexity; sequence SNYNNNNNSNNNNSIISNSNNNNNNNNNN. Position 66-73 (66-73) interacts with GTP; the sequence is GDYAVGKS. The Effector region signature appears at 88-96; sequence YKLTIGVDF. GTP contacts are provided by residues 115–119 and 177–180; these read DIAGH and NKSD. The disordered stretch occupies residues 231 to 260; that stretch reads TNHPPKPEEDTLELTKTNGEKSDDSKSCCK. Positions 248-260 are enriched in basic and acidic residues; the sequence is NGEKSDDSKSCCK. S-geranylgeranyl cysteine attachment occurs at residues Cys258 and Cys259.

This sequence belongs to the small GTPase superfamily. Rab family.

The protein is Ras-related protein Rab-32B (rab32B) of Dictyostelium discoideum (Social amoeba).